The chain runs to 262 residues: (2Z,6E)-farnesyl diphosphate synthase (262 aa).

Residue Asp-40 is part of the active site. Asp-40 is a Mg(2+) binding site. Substrate-binding positions include 41-44 (GNRR), Trp-45, and 86-88 (STE). Catalysis depends on Asn-89, which acts as the Proton acceptor. Residues Arg-92, Arg-211, and 217-219 (RLS) contribute to the substrate site. Glu-230 is a Mg(2+) binding site.

The protein belongs to the UPP synthase family. Z-FPP synthase subfamily. As to quaternary structure, homodimer. Mg(2+) serves as cofactor.

Its subcellular location is the cytoplasm. It is found in the cell membrane. It catalyses the reaction isopentenyl diphosphate + (2E)-geranyl diphosphate = (2Z,6E)-farnesyl diphosphate + diphosphate. Catalyzes the condensation of only one isopentenyl pyrophosphate (IPP) unit in the cis configuration to E-geranyl diphosphate (E-GPP) generating the 15 carbon product (2Z,6E)-farnesyl diphosphate (Z-FPP or EZ-FPP). Z-FPP is the precursor of decaprenyl diphosphate, which has a central role in the biosynthesis of the mycobacterial cell wall. The polypeptide is (2Z,6E)-farnesyl diphosphate synthase (Mycobacterium tuberculosis (strain CDC 1551 / Oshkosh)).